The sequence spans 804 residues: Leucine--tRNA ligase (804 aa).

A 'HIGH' region motif is present at residues 40 to 51 (PYPSGAGLHVGH). Residues 576-580 (KMSKS) carry the 'KMSKS' region motif. Lys579 is a binding site for ATP.

The protein belongs to the class-I aminoacyl-tRNA synthetase family.

The protein localises to the cytoplasm. It catalyses the reaction tRNA(Leu) + L-leucine + ATP = L-leucyl-tRNA(Leu) + AMP + diphosphate. This chain is Leucine--tRNA ligase, found in Bacillus velezensis (strain DSM 23117 / BGSC 10A6 / LMG 26770 / FZB42) (Bacillus amyloliquefaciens subsp. plantarum).